Here is a 78-residue protein sequence, read N- to C-terminus: UPF0270 protein YPTB3725 (78 aa).

The protein belongs to the UPF0270 family.

The chain is UPF0270 protein YPTB3725 from Yersinia pseudotuberculosis serotype I (strain IP32953).